A 134-amino-acid polypeptide reads, in one-letter code: Small ribosomal subunit protein uS9 (134 aa).

This sequence belongs to the universal ribosomal protein uS9 family.

The chain is Small ribosomal subunit protein uS9 from Pseudothermotoga lettingae (strain ATCC BAA-301 / DSM 14385 / NBRC 107922 / TMO) (Thermotoga lettingae).